A 371-amino-acid polypeptide reads, in one-letter code: Protein disulfide isomerase-like 2-2 (371 aa).

The N-terminal stretch at 1 to 27 (MAIPRISPRKTLPLFAALALALAWAFA) is a signal peptide. Thioredoxin domains are found at residues 28-143 (APAF…TEGG) and 147-262 (KLAT…EKCG). Residues C64, C67, C183, and C186 each act as nucleophile in the active site. Cystine bridges form between C64–C67 and C183–C186.

Belongs to the protein disulfide isomerase family.

Its subcellular location is the secreted. The enzyme catalyses Catalyzes the rearrangement of -S-S- bonds in proteins.. Acts as a protein-folding catalyst that interacts with nascent polypeptides to catalyze the formation, isomerization, and reduction or oxidation of disulfide bonds. May play a role in storage protein biogenesis. This is Protein disulfide isomerase-like 2-2 (PDIL2-2) from Oryza sativa subsp. japonica (Rice).